We begin with the raw amino-acid sequence, 97 residues long: uncharacterized protein (97 aa).

In terms of biological role, may have a regulatory function. This is an uncharacterized protein from Synechocystis sp. (strain ATCC 27184 / PCC 6803 / Kazusa).